The following is a 227-amino-acid chain: MLLHIPNVLSPEEVRYFRDRLEDAEWTDGRVTAGEQSAKAKLNLQIPQDSAECRELGEFVLRALGRNPTFNSAALPLRVYPPLFNRYDTGMHFDAHVDNAIRPIPGAGMRIRTDVSSTLFLTGPDEYDGGELVIQDTYGTQSVKLPAGDMVLYPSTSLHSVNRITRGSRWASFFWSQSMVRDDTKRRLLYEFDCSIIETRKALPDSHPAVLGLTSTYHNLLRQWAEL.

The Fe2OG dioxygenase domain maps to 78 to 178; the sequence is RVYPPLFNRY…RWASFFWSQS (101 aa). 3 residues coordinate Fe cation: histidine 96, aspartate 98, and histidine 159. Arginine 169 serves as a coordination point for 2-oxoglutarate.

Requires Fe(2+) as cofactor. It depends on L-ascorbate as a cofactor.

The sequence is that of PKHD-type hydroxylase GOX0559 from Gluconobacter oxydans (strain 621H) (Gluconobacter suboxydans).